The primary structure comprises 608 residues: Probable potassium transport system protein Kup (608 aa).

12 consecutive transmembrane segments (helical) span residues 9 to 29 (LSGV…TSPL), 46 to 66 (PAAI…VVSV), 99 to 119 (TPVL…EVVI), 137 to 157 (PSLD…LFAI), 165 to 185 (VGKL…VLGL), 213 to 233 (TSFF…ALYA), 247 to 267 (WFVV…ALLL), 285 to 305 (ALLP…QAVI), 337 to 357 (IYIP…IMSF), 363 to 383 (LAAA…ILFC), 396 to 416 (LVAA…AANL), and 419 to 439 (IFSG…LMTS).

This sequence belongs to the HAK/KUP transporter (TC 2.A.72) family.

The protein resides in the cell inner membrane. The enzyme catalyses K(+)(in) + H(+)(in) = K(+)(out) + H(+)(out). Its function is as follows. Transport of potassium into the cell. Likely operates as a K(+):H(+) symporter. This is Probable potassium transport system protein Kup from Aeromonas salmonicida (strain A449).